We begin with the raw amino-acid sequence, 498 residues long: MATCLDSLGPLLGGAANSTDAANYICNRFTDTSSAVDATYLLFSAYLVFAMQLGFAMLCAGSVRAKNSMNIMLTNVLDAAAGALFYYLFGFAFAFGTPSKGFIGKQFFGLKHMPQTGYDYDFFLFQWAFAIAAAGITSGSIAERTRFSAYLIYSAFLTGFVYPVVSHWFWSTDGWASAGRLTGPLLFKSGVIDFAGSGVVHLVGGIAGLWGAFIEGPRIGRFDAAGRTVAMKGHSASLVVLGTFLLWFGWFGFNPGSFTTISKIYGESGTIDGQWSAVGRTAVTTSLAGSVAALTTLYGKRWLTGHWNVTDVCNGLLGGFAAITAGCSVVDPWASVICGFVSAWVLIGCNKLSLILKFDDPLEATQLHAGCGAWGIIFTALFARREYVELIYGVPGRPYGLFMGGGGRLLAAHIVQILVIVGWVSATMGTLFYVLHRFGLLRVSPATEMEGMDPTCHGGFGYVDEDEGERRVRAKSAAETARVEPRKSPEQAAAGQFV.

Helical transmembrane passes span 41–61 (LLFS…LCAG), 76–96 (VLDA…FAFG), 122–142 (FFLF…GSIA), 150–170 (YLIY…HWFW), 194–214 (FAGS…GAFI), 238–258 (LVVL…PGSF), 277–299 (AVGR…TLYG), 307–327 (WNVT…TAGC), 329–349 (VVDP…LIGC), 362–382 (LEAT…TALF), and 414–434 (IVQI…LFYV). Residues 473–498 (RAKSAAETARVEPRKSPEQAAAGQFV) are disordered.

This sequence belongs to the ammonia transporter channel (TC 1.A.11.2) family. Expressed in roots.

The protein localises to the membrane. In terms of biological role, ammonium transporter probably involved in ammonium uptake from the soil. This chain is Ammonium transporter 1 member 3 (AMT1-3), found in Oryza sativa subsp. japonica (Rice).